The primary structure comprises 492 residues: Putative methyl-accepting chemotaxis AlkN (492 aa).

2 helical membrane-spanning segments follow: residues 9-29 (FFLILVMAGFSFFVALFGMRL) and 159-179 (YVYFLVVSINCLFFVVIFLLM). One can recognise an HAMP domain in the interval 180–231 (KKTRSSIDEIVHVMNDMSRGDLTYRTIPSNDEVGKMQSSIIAMGAGVSALIE). Positions 236–472 (IQGDLFNSAG…DMLDNANIIR (237 aa)) constitute a Methyl-accepting transducer domain.

This sequence belongs to the methyl-accepting chemotaxis (MCP) protein family.

The protein localises to the membrane. The protein operates within hydrocarbon metabolism; alkane degradation. Its function is as follows. Chemotactic-signal transducers respond to changes in the concentration of attractants and repellents in the environment, transduce a signal from the outside to the inside of the cell, and facilitate sensory adaptation through the variation of the level of methylation. The polypeptide is Putative methyl-accepting chemotaxis AlkN (alkN) (Ectopseudomonas oleovorans (Pseudomonas oleovorans)).